We begin with the raw amino-acid sequence, 205 residues long: Ribosomal RNA large subunit methyltransferase E (205 aa).

S-adenosyl-L-methionine-binding residues include glycine 60, tryptophan 62, aspartate 80, aspartate 96, and aspartate 121. Lysine 161 serves as the catalytic Proton acceptor.

It belongs to the class I-like SAM-binding methyltransferase superfamily. RNA methyltransferase RlmE family.

Its subcellular location is the cytoplasm. It carries out the reaction uridine(2552) in 23S rRNA + S-adenosyl-L-methionine = 2'-O-methyluridine(2552) in 23S rRNA + S-adenosyl-L-homocysteine + H(+). Functionally, specifically methylates the uridine in position 2552 of 23S rRNA at the 2'-O position of the ribose in the fully assembled 50S ribosomal subunit. The chain is Ribosomal RNA large subunit methyltransferase E from Dechloromonas aromatica (strain RCB).